Here is a 159-residue protein sequence, read N- to C-terminus: MYKQKGFTLIELMIVIAIIGILAAIALPLYQDHMAKAQINRVFYELGSTKTAVESILAHGGIPTVDPSQDGVVQNSRRLEFLGLNQNPNSNLIFTASVGLNSNQFERVNATFGRNALPQIQGAVISFVRDNQGQWTCEIDKSNAAYCPPKYTPATCVTI.

The propeptide at 1 to 6 (MYKQKG) is leader sequence. F7 is subject to N-methylphenylalanine. Residues 7–29 (FTLIELMIVIAIIGILAAIALPL) traverse the membrane as a helical segment. C137 and C156 form a disulfide bridge.

It belongs to the N-Me-Phe pilin family.

Its subcellular location is the fimbrium. It is found in the membrane. The chain is Fimbrial protein EcpB (ecpB) from Eikenella corrodens.